The sequence spans 538 residues: Furcatin hydrolase (538 aa).

Residues 1-66 (MATITTLASS…NFNKDNWLAS (66 aa)) constitute a chloroplast transit peptide. The segment at 18–37 (SFPGGSSRKPKKDNLSIKPP) is disordered. A beta-D-glucoside contacts are provided by residues Gln88, His192, and 237 to 238 (NE). The active-site Proton donor is the Glu238. A disulfide bridge connects residues Cys257 and Cys260. A beta-D-glucoside-binding positions include Tyr376, Glu447, Trp494, 501–502 (EW), and Phe510. Residue Glu447 is the Nucleophile of the active site.

It belongs to the glycosyl hydrolase 1 family. Expressed in young and mature leaves, but not in fruit and stem.

The protein resides in the plastid. It localises to the chloroplast. It carries out the reaction 7-[beta-D-apiofuranosyl-(1-&gt;6)-beta-D-glucopyranosyloxy]isoflavonoid + H2O = a 7-hydroxyisoflavonoid + beta-D-apiofuranosyl-(1-&gt;6)-D-glucose.. Disaccharide-specific acuminosidase, hydrolyzes the beta-glycosidic bond between p-allylphenol and acuminose with retention of anomeric configuration. Has highest activity towards furcatin, and lower activity towards beta-primeverosides and beta-vicianoside. Has very low activity towards beta-gentobiosides. In Viburnum furcatum (Scarlet leaved viburnum), this protein is Furcatin hydrolase.